Here is a 450-residue protein sequence, read N- to C-terminus: Tubulin alpha chain (450 aa).

Gln-11 lines the GTP pocket. Lys-40 is modified (N6-acetyllysine). Positions 71, 144, 145, 179, 206, and 228 each coordinate GTP. Glu-71 lines the Mg(2+) pocket. Residue Glu-254 is part of the active site.

Belongs to the tubulin family. As to quaternary structure, dimer of alpha and beta chains. A typical microtubule is a hollow water-filled tube with an outer diameter of 25 nm and an inner diameter of 15 nM. Alpha-beta heterodimers associate head-to-tail to form protofilaments running lengthwise along the microtubule wall with the beta-tubulin subunit facing the microtubule plus end conferring a structural polarity. Microtubules usually have 13 protofilaments but different protofilament numbers can be found in some organisms and specialized cells. Mg(2+) serves as cofactor. Post-translationally, undergoes a tyrosination/detyrosination cycle, the cyclic removal and re-addition of a C-terminal tyrosine residue by the enzymes tubulin tyrosine carboxypeptidase (TTCP) and tubulin tyrosine ligase (TTL), respectively. Acetylation of alpha chains at Lys-40 stabilizes microtubules and affects affinity and processivity of microtubule motors. This modification has a role in multiple cellular functions, ranging from cell motility, cell cycle progression or cell differentiation to intracellular trafficking and signaling.

Its subcellular location is the cytoplasm. It localises to the cytoskeleton. It carries out the reaction GTP + H2O = GDP + phosphate + H(+). Its function is as follows. Tubulin is the major constituent of microtubules, a cylinder consisting of laterally associated linear protofilaments composed of alpha- and beta-tubulin heterodimers. Microtubules grow by the addition of GTP-tubulin dimers to the microtubule end, where a stabilizing cap forms. Below the cap, tubulin dimers are in GDP-bound state, owing to GTPase activity of alpha-tubulin. The protein is Tubulin alpha chain (TUBA) of Prunus dulcis (Almond).